The following is a 440-amino-acid chain: Thymidine phosphorylase (440 aa).

The protein belongs to the thymidine/pyrimidine-nucleoside phosphorylase family. Homodimer.

It catalyses the reaction thymidine + phosphate = 2-deoxy-alpha-D-ribose 1-phosphate + thymine. The protein operates within pyrimidine metabolism; dTMP biosynthesis via salvage pathway; dTMP from thymine: step 1/2. Functionally, the enzymes which catalyze the reversible phosphorolysis of pyrimidine nucleosides are involved in the degradation of these compounds and in their utilization as carbon and energy sources, or in the rescue of pyrimidine bases for nucleotide synthesis. The polypeptide is Thymidine phosphorylase (Klebsiella pneumoniae subsp. pneumoniae (strain ATCC 700721 / MGH 78578)).